Reading from the N-terminus, the 266-residue chain is Thymidylate synthase (266 aa).

Position 24 (R24) interacts with dUMP. Position 54 (H54) interacts with (6R)-5,10-methylene-5,6,7,8-tetrahydrofolate. 129–130 contributes to the dUMP binding site; that stretch reads RR. C149 serves as the catalytic Nucleophile. DUMP is bound by residues 169-172, N180, and 210-212; these read RSAD and HIY. Position 172 (D172) interacts with (6R)-5,10-methylene-5,6,7,8-tetrahydrofolate. A265 lines the (6R)-5,10-methylene-5,6,7,8-tetrahydrofolate pocket.

Belongs to the thymidylate synthase family. Bacterial-type ThyA subfamily. In terms of assembly, homodimer.

It is found in the cytoplasm. It catalyses the reaction dUMP + (6R)-5,10-methylene-5,6,7,8-tetrahydrofolate = 7,8-dihydrofolate + dTMP. It participates in pyrimidine metabolism; dTTP biosynthesis. Catalyzes the reductive methylation of 2'-deoxyuridine-5'-monophosphate (dUMP) to 2'-deoxythymidine-5'-monophosphate (dTMP) while utilizing 5,10-methylenetetrahydrofolate (mTHF) as the methyl donor and reductant in the reaction, yielding dihydrofolate (DHF) as a by-product. This enzymatic reaction provides an intracellular de novo source of dTMP, an essential precursor for DNA biosynthesis. In Mycolicibacterium smegmatis (strain ATCC 700084 / mc(2)155) (Mycobacterium smegmatis), this protein is Thymidylate synthase.